A 317-amino-acid chain; its full sequence is Aspartate carbamoyltransferase catalytic subunit (317 aa).

Carbamoyl phosphate-binding residues include Arg55 and Thr56. Position 83 (Lys83) interacts with L-aspartate. The carbamoyl phosphate site is built by Arg105, His138, and Gln141. Residues Arg171 and Arg225 each coordinate L-aspartate. 2 residues coordinate carbamoyl phosphate: Gly266 and Pro267.

The protein belongs to the aspartate/ornithine carbamoyltransferase superfamily. ATCase family. As to quaternary structure, heterododecamer (2C3:3R2) of six catalytic PyrB chains organized as two trimers (C3), and six regulatory PyrI chains organized as three dimers (R2).

It carries out the reaction carbamoyl phosphate + L-aspartate = N-carbamoyl-L-aspartate + phosphate + H(+). Its pathway is pyrimidine metabolism; UMP biosynthesis via de novo pathway; (S)-dihydroorotate from bicarbonate: step 2/3. Functionally, catalyzes the condensation of carbamoyl phosphate and aspartate to form carbamoyl aspartate and inorganic phosphate, the committed step in the de novo pyrimidine nucleotide biosynthesis pathway. The chain is Aspartate carbamoyltransferase catalytic subunit from Mycobacteroides abscessus (strain ATCC 19977 / DSM 44196 / CCUG 20993 / CIP 104536 / JCM 13569 / NCTC 13031 / TMC 1543 / L948) (Mycobacterium abscessus).